Consider the following 133-residue polypeptide: P2Y purinoceptor 2 (133 aa).

Residues 1–26 are Cytoplasmic-facing; it reads ISVHRCLGVLRPLHSLRWGRARYARR. Residues 27 to 47 form a helical membrane-spanning segment; the sequence is VAFAVWVLVLYCQAPVLYFVT. At 48–74 the chain is on the extracellular side; that stretch reads TSTRSSRIICHDTSARELFSHFVAYSS. Residues 75–95 form a helical membrane-spanning segment; the sequence is VMLSLLFAAPFAVILVCYVLM. Topologically, residues 96–116 are cytoplasmic; that stretch reads ARRLLKPAYGTSGGLPRAKRK. Residues 117–133 form a helical membrane-spanning segment; sequence SVRTIAIVLTVFVLCFL.

Belongs to the G-protein coupled receptor 1 family.

It localises to the cell membrane. Receptor for ATP and UTP coupled to G-proteins that activate a phosphatidylinositol-calcium second messenger system. The sequence is that of P2Y purinoceptor 2 (P2RY2) from Bos taurus (Bovine).